The chain runs to 550 residues: Integral membrane protein DGCR2/IDD (550 aa).

The first 20 residues, 1-20, serve as a signal peptide directing secretion; that stretch reads MVPKADSGAFLLLFLLVLTV. Residues 21–349 lie on the Extracellular side of the membrane; that stretch reads TEPLRPELRC…LFDSMASGMR (329 aa). The region spanning 28 to 68 is the LDL-receptor class A domain; the sequence is LRCNPGQFACRSGTIQCIPLPWQCDGWATCEDESDEANCPE. Disulfide bonds link Cys-30-Cys-44, Cys-37-Cys-57, and Cys-51-Cys-66. Residues 69–92 form a disordered region; the sequence is VTGEVRPHHGKEAVDPRQGRARGG. Basic and acidic residues predominate over residues 71–92; sequence GEVRPHHGKEAVDPRQGRARGG. Positions 115 to 241 constitute a C-type lectin domain; the sequence is CPTGWHHYEG…FCAQLQCFHF (127 aa). 2 disulfides stabilise this stretch: Cys-145–Cys-265 and Cys-233–Cys-257. N-linked (GlcNAc...) asparagine glycosylation is found at Asn-149 and Asn-196. The VWFC domain occupies 270-333; that stretch reads TCVDIKDNVV…PKECCKFMCL (64 aa). The chain crosses the membrane as a helical span at residues 350–368; it reads LVVSCISSFLILSLLLFMV. At 369-550 the chain is on the cytoplasmic side; that stretch reads HRLRQRRRER…HSRSSLNTVV (182 aa). Ser-381 carries the post-translational modification Phosphoserine. Residues 500–550 form a disordered region; the sequence is AGASLADLEDSADSSSALLVPPDPAQSGSTPAAEALPGGGRHSRSSLNTVV.

Predominantly expressed in brain, heart, lung and fetal kidney. Low levels in liver and adult kidney.

It is found in the membrane. Its function is as follows. Putative adhesion receptor, that could be involved in cell-cell or cell-matrix interactions required for normal cell differentiation and migration. This is Integral membrane protein DGCR2/IDD (DGCR2) from Homo sapiens (Human).